Consider the following 129-residue polypeptide: uncharacterized protein (129 aa).

3 consecutive transmembrane segments (helical) span residues 15–35 (IFII…IFVF), 48–68 (IFSF…YYFF), and 107–127 (INIF…NLVC).

The protein resides in the membrane. This is an uncharacterized protein from Saccharomyces cerevisiae (strain ATCC 204508 / S288c) (Baker's yeast).